The primary structure comprises 716 residues: ATP-dependent zinc metalloprotease FTSH 1, chloroplastic (716 aa).

A chloroplast-targeting transit peptide spans 1-48 (MASNSLLRSSSNFFLGSHIIISSPTPKTTRKPSFPFSFVSRAKYQITR). The N-terminal 38 residues, 49–86 (SSQDENSPNGKPNSPFSSQVALAAILLSSISSSPLALA), are a transit peptide targeting the thylakoid. Residues 204–224 (FTVIGNLIFPLLAFGGLFLLF) traverse the membrane as a helical segment. 302–309 (GPPGTGKT) lines the ATP pocket. Zn(2+) is bound at residue His-524. Glu-525 is an active-site residue. Residues His-528 and Asp-605 each coordinate Zn(2+).

This sequence in the N-terminal section; belongs to the AAA ATPase family. The protein in the C-terminal section; belongs to the peptidase M41 family. Interacts with CHIP and HSP70. Heterohexamers with FTSH2, FTSH5 and FTSH8. Zn(2+) serves as cofactor. The FTSH1 precursor is ubiquitinated by CHIP in the cytoplasm. As to expression, ubiquitous.

It is found in the plastid. The protein resides in the chloroplast thylakoid membrane. In terms of biological role, part of a complex that function as an ATP-dependent zinc metallopeptidase. Involved in the thylakoid formation and in the removal of damaged D1 in the photosystem II, preventing cell death under high-intensity light conditions. This Arabidopsis thaliana (Mouse-ear cress) protein is ATP-dependent zinc metalloprotease FTSH 1, chloroplastic (FTSH1).